Consider the following 473-residue polypeptide: Lactate utilization protein B (473 aa).

2 consecutive 4Fe-4S ferredoxin-type domains span residues 302–332 (GSEFRQVLQCIRCAACVNVCPVYRHVGGHSY) and 351–380 (YNDYKELPYASSLCGACTEACPVKIPLHDL). [4Fe-4S] cluster-binding residues include cysteine 311, cysteine 314, cysteine 317, cysteine 321, cysteine 364, cysteine 367, and cysteine 371.

This sequence belongs to the LutB/YkgF family.

Is involved in L-lactate degradation and allows cells to grow with lactate as the sole carbon source. Has probably a role as an electron transporter during oxidation of L-lactate. This is Lactate utilization protein B from Bacillus cereus (strain AH820).